The chain runs to 95 residues: Parvalbumin alpha (95 aa).

Phosphoserine is present on Ser19. EF-hand domains follow at residues 34 to 69 (KNRE…FSAD) and 73 to 95 (LSDT…KIGA). Residues Asp47, Asp49, Ser51, Phe53, Glu55, Glu58, Asp86, Asp88, Asp90, and Lys92 each contribute to the Ca(2+) site.

Belongs to the parvalbumin family.

Its function is as follows. In muscle, parvalbumin is thought to be involved in relaxation after contraction. It binds two calcium ions. This chain is Parvalbumin alpha (PVALB), found in Cavia porcellus (Guinea pig).